The primary structure comprises 192 residues: Protein ORF45 (192 aa).

Functionally, plays a role in the expression of ORF41, which itself is required for late gene expression. This chain is Protein ORF45, found in Autographa californica nuclear polyhedrosis virus (AcMNPV).